The following is a 583-amino-acid chain: Protein LONG AFTER FAR-RED 3 (583 aa).

The helical transmembrane segment at 7-27 threads the bilayer; the sequence is FPVMIGFVSAAVFLLISVAYL. N-linked (GlcNAc...) asparagine glycosylation is found at Asn-55 and Asn-374.

Belongs to the metallo-dependent hydrolases superfamily. Expressed at low level in seedlings, roots, leaves, stems, flowers, and siliques.

It is found in the membrane. The protein resides in the cytoplasm. Its subcellular location is the perinuclear region. Functionally, required for phyA-controlled responses to continuous far-red light (FRc) conditions, including the inhibition of hypocotyl elongation and the regulation of XTH15/XTR7 expression. The protein is Protein LONG AFTER FAR-RED 3 of Arabidopsis thaliana (Mouse-ear cress).